The following is a 66-amino-acid chain: Cold shock protein 1 (66 aa).

In terms of domain architecture, CSD spans 4 to 63 (GTVKWFNADKGYGFITGEDGNDVFVHFSAIQTDGFKTLEEGQKVTFDEESSDRGPQAANV). The tract at residues 47–66 (VTFDEESSDRGPQAANVVPQ) is disordered.

The protein resides in the cytoplasm. In Lactiplantibacillus plantarum (strain ATCC BAA-793 / NCIMB 8826 / WCFS1) (Lactobacillus plantarum), this protein is Cold shock protein 1 (csp).